We begin with the raw amino-acid sequence, 284 residues long: Acetylglutamate kinase (284 aa).

Substrate is bound by residues Gly64–Gly65, Arg86, and Asn177.

This sequence belongs to the acetylglutamate kinase family. ArgB subfamily.

The protein localises to the cytoplasm. The catalysed reaction is N-acetyl-L-glutamate + ATP = N-acetyl-L-glutamyl 5-phosphate + ADP. The protein operates within amino-acid biosynthesis; L-arginine biosynthesis; N(2)-acetyl-L-ornithine from L-glutamate: step 2/4. Functionally, catalyzes the ATP-dependent phosphorylation of N-acetyl-L-glutamate. The protein is Acetylglutamate kinase of Haemophilus ducreyi (strain 35000HP / ATCC 700724).